A 278-amino-acid chain; its full sequence is 4-deoxy-L-threo-5-hexosulose-uronate ketol-isomerase (278 aa).

Positions 196, 198, 203, and 245 each coordinate Zn(2+).

Belongs to the KduI family. Homohexamer. Zn(2+) serves as cofactor.

It carries out the reaction 5-dehydro-4-deoxy-D-glucuronate = 3-deoxy-D-glycero-2,5-hexodiulosonate. Its pathway is glycan metabolism; pectin degradation; 2-dehydro-3-deoxy-D-gluconate from pectin: step 4/5. In terms of biological role, catalyzes the isomerization of 5-dehydro-4-deoxy-D-glucuronate to 3-deoxy-D-glycero-2,5-hexodiulosonate. This Escherichia coli (strain 55989 / EAEC) protein is 4-deoxy-L-threo-5-hexosulose-uronate ketol-isomerase.